The primary structure comprises 456 residues: Histidine--tRNA ligase (456 aa).

The protein belongs to the class-II aminoacyl-tRNA synthetase family. As to quaternary structure, homodimer.

It localises to the cytoplasm. It catalyses the reaction tRNA(His) + L-histidine + ATP = L-histidyl-tRNA(His) + AMP + diphosphate + H(+). This Cupriavidus taiwanensis (strain DSM 17343 / BCRC 17206 / CCUG 44338 / CIP 107171 / LMG 19424 / R1) (Ralstonia taiwanensis (strain LMG 19424)) protein is Histidine--tRNA ligase.